Reading from the N-terminus, the 41-residue chain is Photosystem I reaction center subunit IX (41 aa).

A helical transmembrane segment spans residues 7-27 (YLSTAPVLLTLWMTFTAGFII).

This sequence belongs to the PsaJ family.

The protein resides in the plastid. The protein localises to the chloroplast thylakoid membrane. In terms of biological role, may help in the organization of the PsaE and PsaF subunits. This chain is Photosystem I reaction center subunit IX, found in Thalassiosira pseudonana (Marine diatom).